The primary structure comprises 520 residues: MSESGHSQPGLYGIERRRRWKEPGSGGPQNLSGPGGRERDYIAPWERERRDASEETSTSVMQKTPIILSKPPAERSKQPPPPTAPAAPPAPAPLEKPIVLMKPREEGKGPVAVTGASTPEGTAPPPPAAPAPPKGEKEGQRPTQPVYQIQNRGMGTAAPAAMDPVVGQAKLLPPERMKHSIKLVDDQMNWCDSAIEYLLDQTDVLVVGVLGLQGTGKSMVMSLLSANTPEEDQRTYVFRAQSAEMKERGGNQTSGIDFFITQERIVFLDTQPILSPSILDHLINNDRKLPPEYNLPHTYVEMQSLQIAAFLFTVCHVVIVVQDWFTDLSLYRFLQTAEMVKPSTPSPSHESSSSSGSDEGTEYYPHLVFLQNKARREDFCPRKLRQMHLMIDQLMAHSHLRYKGTLSMLQCNVFPGLPPDFLDSEVNLFLVPFMDSEAESENPPRAGPGSSPLFSLLPGYRGHPSFQSLVSKLRSQVMSMARPQLSHTILTEKNWFHYAARIWDGVRKSSALAEYSRLLA.

Disordered regions lie at residues 1–94 (MSES…PAPL), 108–143 (KGPVAVTGASTPEGTAPPPPAAPAPPKGEKEGQRPT), and 341–360 (KPSTPSPSHESSSSSGSDEG). Residue Ser-2 is modified to N-acetylserine. Ser-2, Ser-4, Ser-7, Ser-32, and Ser-53 each carry phosphoserine. Over residues 36–53 (GRERDYIAPWERERRDAS) the composition is skewed to basic and acidic residues. 2 stretches are compositionally biased toward pro residues: residues 78-94 (QPPPPTAPAAPPAPAPL) and 122-133 (TAPPPPAAPAPP). A compositionally biased stretch (low complexity) spans 342–357 (PSTPSPSHESSSSSGS). Ser-451 bears the Phosphoserine mark.

It belongs to the SMG9 family. As to quaternary structure, self-associates to form homodimers and forms heterodimers with SMG8; these assembly forms may represent SMG1C intermediate forms. Component of the SMG1C complex composed of SMG1, SMG8 and SMG9. Interacts with DHX34; the interaction is RNA-independent. Phosphorylated by SMG1.

Involved in nonsense-mediated decay (NMD) of mRNAs containing premature stop codons. Is recruited by release factors to stalled ribosomes together with SMG1 and SMG8 (forming the SMG1C protein kinase complex) and, in the SMG1C complex, is required for the efficient association between SMG1 and SMG8. Plays a role in brain, heart, and eye development. This Homo sapiens (Human) protein is Nonsense-mediated mRNA decay factor SMG9.